The following is a 224-amino-acid chain: Transcription cofactor HES-6 (224 aa).

The tract at residues 1–31 is disordered; it reads MAPSQAPSRDRAGQEDEDRWEARGDRKARKP. A compositionally biased stretch (basic and acidic residues) spans 8 to 25; that stretch reads SRDRAGQEDEDRWEARGD. A bHLH domain is found at 25-77; it reads DRKARKPLVEKKRRARINESLQELRLLLAGTEVQAKLENAEVLELTVRRVQGA. An Orange domain is found at 96-129; the sequence is FAAGYIQCMHEVHTFVSTCQAIDATVSAELLNHL. Residues 146–209 form a disordered region; that stretch reads GDSLAGLPGG…GPDLVSTSLG (64 aa). Over residues 158–171 the composition is skewed to low complexity; it reads RSSWPPGGSPESPL. The span at 181–190 shows a compositional bias: acidic residues; sequence LCSDLEEIPE. Positions 221 to 224 match the WRPW motif motif; the sequence is WRPW.

Transcription repression requires formation of a complex with a corepressor protein of the Groucho/TLE family. Interacts with HES1. As to expression, expressed in both undifferentiated and differentiated cells. High levels of expression are observed in several embryonic tissues including the nervous system, muscle and thymus. In the nervous system, initially expressed in the closing neural tube, then in the spinal cord, cranial and dorsal root ganglia, and brain neuroepithelium. Also expressed in epithelial cells of the embryonic respiratory, urinary and digestive systems. In the limb buds, expressed in skeletal muscle and presumptive tendons.

It is found in the nucleus. Does not bind DNA itself but suppresses both HES1-mediated N box-dependent transcriptional repression and binding of HES1 to E box sequences. Also suppresses HES1-mediated inhibition of the heterodimer formed by ASCL1/MASH1 and TCF3/E47, allowing ASCL1 and TCF3 to up-regulate transcription in its presence. Promotes cell differentiation. The protein is Transcription cofactor HES-6 of Mus musculus (Mouse).